Consider the following 496-residue polypeptide: Fibronectin type III and SPRY domain-containing protein 1 (496 aa).

Positions 4–99 form a coiled coil; sequence QKEALRKIIT…ALESSEELLE (96 aa). The 58-residue stretch at 105–162 folds into the COS domain; the sequence is LLATDSKDFPQAAKQIKDGVTMAPAFRLSLKAKVSDNMSHLMVDFAQERRMLQALTFL. The region spanning 164-268 is the Fibronectin type-III domain; sequence VPSAPVIDLT…EPVTLETPAF (105 aa). Positions 268-477 constitute a B30.2/SPRY domain; it reads FMFRLDASTS…VTTGLQVPSS (210 aa). The segment at 301–336 is disordered; it reads KAREKDGKGRTASPVNSPARGTPSPKRMPSGRGGRD. Omega-N-methylarginine occurs at positions 310 and 320.

Oligomerization is required for binding to microtubules.

The protein resides in the cytoplasm. It localises to the cytoskeleton. Its subcellular location is the microtubule organizing center. It is found in the centrosome. The protein localises to the nucleus. The protein resides in the cleavage furrow. Functionally, may be involved in microtubule organization and stabilization. The polypeptide is Fibronectin type III and SPRY domain-containing protein 1 (FSD1) (Bos taurus (Bovine)).